We begin with the raw amino-acid sequence, 178 residues long: M-phase-specific PLK1-interacting protein (178 aa).

The segment covering 1-15 (MHRPNFRPPTPPYPS) has biased composition (pro residues). The interval 1 to 134 (MHRPNFRPPT…RGREKRMSNE (134 aa)) is disordered. Residues 17–34 (GIGGWGGGNNFRGALGGG) show a composition bias toward gly residues. R36 is subject to Asymmetric dimethylarginine. Phosphoserine occurs at positions 39 and 46. T50 is modified (phosphothreonine). At R56 the chain carries Omega-N-methylarginine. Residues R58, R67, and R76 each carry the asymmetric dimethylarginine modification. Residues 78 to 96 (GSPSPGGYPGSYSRSPAGS) show a composition bias toward low complexity. Phosphoserine occurs at positions 79, 81, 92, 103, and 114. The span at 97–121 (QHQFGYSPGQQQTYPQGSPRTSTPF) shows a compositional bias: polar residues. Residue R116 is modified to Omega-N-methylarginine. Phosphothreonine is present on T119. Phosphoserine occurs at positions 123 and 132.

In terms of assembly, interacts with PLK1; phosphorylation-dependent. Phosphorylated during mitosis in the cell cycle probably by CDK1.

The protein localises to the nucleus. The protein resides in the cytoplasm. Its subcellular location is the cytoskeleton. It localises to the microtubule organizing center. It is found in the centrosome. Functionally, may play a role in maintenance of cell cycle integrity by regulating mitosis or cytokinesis. The chain is M-phase-specific PLK1-interacting protein (Mplkip) from Mus musculus (Mouse).